The sequence spans 559 residues: Polypeptide N-acetylgalactosaminyltransferase 1 (559 aa).

At 1 to 8 the chain is on the cytoplasmic side; the sequence is MRKFAYCK. The helical; Signal-anchor for type II membrane protein transmembrane segment at 9-28 threads the bilayer; sequence VVLATSLIWVLLDMFLLLYF. Over 29-559 the chain is Lumenal; the sequence is SECNKCDEKK…LRNVTLPEIF (531 aa). Residues 45–66 form a disordered region; that stretch reads GDVLEPVQKPHEGPGEMGKPVV. N-linked (GlcNAc...) asparagine glycosylation occurs at Asn-95. 5 cysteine pairs are disulfide-bonded: Cys-106–Cys-339, Cys-330–Cys-408, Cys-442–Cys-459, Cys-482–Cys-497, and Cys-523–Cys-540. Positions 115-225 are catalytic subdomain A; that stretch reads LPTTSVVIVF…VGWLEPLLAR (111 aa). The substrate site is built by Asp-156 and Arg-186. Mn(2+) is bound by residues Asp-209 and His-211. The catalytic subdomain B stretch occupies residues 285 to 347; it reads PVRTPTMAGG…TCSHVGHVFR (63 aa). Position 316 (Trp-316) interacts with substrate. Residue His-344 participates in Mn(2+) binding. Substrate-binding residues include Arg-347 and Tyr-352. In terms of domain architecture, Ricin B-type lectin spans 429-551; that stretch reads SSLGEIRNVE…GSRSQQWLLR (123 aa). The N-linked (GlcNAc...) asparagine glycan is linked to Asn-552.

The protein belongs to the glycosyltransferase 2 family. GalNAc-T subfamily. Mn(2+) serves as cofactor.

It localises to the golgi apparatus. The protein localises to the golgi stack membrane. The protein resides in the secreted. The enzyme catalyses L-seryl-[protein] + UDP-N-acetyl-alpha-D-galactosamine = a 3-O-[N-acetyl-alpha-D-galactosaminyl]-L-seryl-[protein] + UDP + H(+). It carries out the reaction L-threonyl-[protein] + UDP-N-acetyl-alpha-D-galactosamine = a 3-O-[N-acetyl-alpha-D-galactosaminyl]-L-threonyl-[protein] + UDP + H(+). Its pathway is protein modification; protein glycosylation. In terms of biological role, catalyzes the initial reaction in O-linked oligosaccharide biosynthesis, the transfer of an N-acetyl-D-galactosamine residue to a serine or threonine residue on the protein receptor. Has a broad spectrum of substrates such as apomucin-, MUC5AC-, MUC1- and MUC2-derived peptides. The protein is Polypeptide N-acetylgalactosaminyltransferase 1 of Sus scrofa (Pig).